The following is a 248-amino-acid chain: MLLCSLTLMLLWMVASGLECDTKEVCLGSPGIPGTPGSHGLPGRDGRDGIKGDPGPPGPMGPPGGMPGLPGRDGMTGAPGLPGERGEKGEPGERGPPGFPAYLDEELQGTLHEIRHQVLQSQGVLILQGSMLEVGEKVFSTNGQSLNFDAIKELCARAGGHIAAPRSPEENEAITSIVKKHNTYAYLGLAEGPTAGDFYYLDGAPVNYTNWYPGEPRGRGKEKCVEIYTDGQWNDKNCLQYRLAICEF.

The N-terminal stretch at 1-17 (MLLCSLTLMLLWMVASG) is a signal peptide. The Collagen-like domain maps to 28–100 (GSPGIPGTPG…PGERGPPGFP (73 aa)). Residues 29–103 (SPGIPGTPGS…RGPPGFPAYL (75 aa)) are disordered. A compositionally biased stretch (basic and acidic residues) spans 42–51 (PGRDGRDGIK). Positions 54-65 (PGPPGPMGPPGG) are enriched in pro residues. Positions 69 to 82 (LPGRDGMTGAPGLP) are enriched in low complexity. The segment covering 84-93 (ERGEKGEPGE) has biased composition (basic and acidic residues). In terms of domain architecture, C-type lectin spans 127–247 (LQGSMLEVGE…CLQYRLAICE (121 aa)). Intrachain disulfides connect Cys-155–Cys-246 and Cys-224–Cys-238. Asn-207 carries N-linked (GlcNAc...) asparagine glycosylation. Ca(2+) is bound by residues Glu-215, Arg-217, Asn-234, and Asp-235.

This sequence belongs to the SFTPA family. In terms of assembly, oligomeric complex of 6 set of homotrimers.

Its subcellular location is the secreted. It localises to the extracellular space. The protein resides in the extracellular matrix. It is found in the surface film. In terms of biological role, in presence of calcium ions, it binds to surfactant phospholipids and contributes to lower the surface tension at the air-liquid interface in the alveoli of the mammalian lung and is essential for normal respiration. Enhances the expression of MYO18A/SP-R210 on alveolar macrophages. This chain is Pulmonary surfactant-associated protein A (SFTPA1), found in Ovis aries (Sheep).